The sequence spans 658 residues: Threonine--tRNA ligase (658 aa).

The TGS domain maps to 1-61 (MIELVFPDGS…EKGGAFKILT (61 aa)). The interval 243–535 (DHRKLGRQMD…LIENYAGAFP (293 aa)) is catalytic. Residues Cys-335, His-386, and His-512 each coordinate Zn(2+).

This sequence belongs to the class-II aminoacyl-tRNA synthetase family. Homodimer. Zn(2+) serves as cofactor.

It is found in the cytoplasm. The enzyme catalyses tRNA(Thr) + L-threonine + ATP = L-threonyl-tRNA(Thr) + AMP + diphosphate + H(+). Its function is as follows. Catalyzes the attachment of threonine to tRNA(Thr) in a two-step reaction: L-threonine is first activated by ATP to form Thr-AMP and then transferred to the acceptor end of tRNA(Thr). Also edits incorrectly charged L-seryl-tRNA(Thr). This Phenylobacterium zucineum (strain HLK1) protein is Threonine--tRNA ligase.